Here is a 517-residue protein sequence, read N- to C-terminus: Crotonobetaine/carnitine--CoA ligase (517 aa).

Belongs to the ATP-dependent AMP-binding enzyme family.

The catalysed reaction is 4-(trimethylamino)butanoate + ATP + CoA = 4-(trimethylamino)butanoyl-CoA + AMP + diphosphate. It catalyses the reaction crotonobetaine + ATP + CoA = crotonobetainyl-CoA + AMP + diphosphate. The enzyme catalyses (R)-carnitine + ATP + CoA = (R)-carnitinyl-CoA + AMP + diphosphate. It functions in the pathway amine and polyamine metabolism; carnitine metabolism. Functionally, catalyzes the transfer of CoA to carnitine, generating the initial carnitinyl-CoA needed for the CaiB reaction cycle. Also has activity toward crotonobetaine and gamma-butyrobetaine. The protein is Crotonobetaine/carnitine--CoA ligase of Citrobacter koseri (strain ATCC BAA-895 / CDC 4225-83 / SGSC4696).